We begin with the raw amino-acid sequence, 109 residues long: FK506-binding protein (109 aa).

The PPIase FKBP-type domain occupies 20-108 (GKEITVHYTG…IFEVELLKVY (89 aa)).

Belongs to the FKBP-type PPIase family.

The catalysed reaction is [protein]-peptidylproline (omega=180) = [protein]-peptidylproline (omega=0). Its activity is regulated as follows. Inhibited by FK506. PPIases accelerate the folding of proteins. The chain is FK506-binding protein (fbp) from Neisseria meningitidis serogroup B (strain ATCC BAA-335 / MC58).